The primary structure comprises 334 residues: Protein-methionine-sulfoxide reductase catalytic subunit MsrP (334 aa).

A signal peptide (tat-type signal) is located at residues 1 to 44 (MKKNQFLKESDVTAESVFFMKRRQVLKALGISAAALSLPHAAHA). Mo-molybdopterin contacts are provided by residues Asn88, 91-92 (YE), Cys146, Thr181, Asn233, Arg238, and 249-251 (GIK).

This sequence belongs to the MsrP family. Heterodimer of a catalytic subunit (MsrP) and a heme-binding subunit (MsrQ). Mo-molybdopterin serves as cofactor. Post-translationally, predicted to be exported by the Tat system. The position of the signal peptide cleavage has not been experimentally proven.

The protein localises to the periplasm. It carries out the reaction L-methionyl-[protein] + a quinone + H2O = L-methionyl-(S)-S-oxide-[protein] + a quinol. The enzyme catalyses L-methionyl-[protein] + a quinone + H2O = L-methionyl-(R)-S-oxide-[protein] + a quinol. Functionally, part of the MsrPQ system that repairs oxidized periplasmic proteins containing methionine sulfoxide residues (Met-O), using respiratory chain electrons. Thus protects these proteins from oxidative-stress damage caused by reactive species of oxygen and chlorine generated by the host defense mechanisms. MsrPQ is essential for the maintenance of envelope integrity under bleach stress, rescuing a wide series of structurally unrelated periplasmic proteins from methionine oxidation, including the primary periplasmic chaperone SurA and the lipoprotein Pal. The catalytic subunit MsrP is non-stereospecific, being able to reduce both (R-) and (S-) diastereoisomers of methionine sulfoxide. This is Protein-methionine-sulfoxide reductase catalytic subunit MsrP from Escherichia coli (strain UTI89 / UPEC).